Here is a 136-residue protein sequence, read N- to C-terminus: ATP synthase epsilon chain (136 aa).

The protein belongs to the ATPase epsilon chain family. As to quaternary structure, F-type ATPases have 2 components, CF(1) - the catalytic core - and CF(0) - the membrane proton channel. CF(1) has five subunits: alpha(3), beta(3), gamma(1), delta(1), epsilon(1). CF(0) has three main subunits: a, b and c.

It is found in the cell inner membrane. Functionally, produces ATP from ADP in the presence of a proton gradient across the membrane. This chain is ATP synthase epsilon chain, found in Afipia carboxidovorans (strain ATCC 49405 / DSM 1227 / KCTC 32145 / OM5) (Oligotropha carboxidovorans).